The sequence spans 223 residues: Capsid protein (223 aa).

Over residues 1–19 (MDDETKKLKNKNKETKEGD) the composition is skewed to basic and acidic residues. The interval 1-21 (MDDETKKLKNKNKETKEGDDV) is disordered.

The protein belongs to the closteroviridae capsid protein family. In terms of processing, consists of at least two size variants, CP1 and CP2, which result of post-translational proteolysis at sites approximately 12 to 15 and 26 AA from the N-terminus respectively.

It localises to the virion. The sequence is that of Capsid protein from Citrus tristeza virus (isolate T36) (CTV).